The primary structure comprises 313 residues: DNA-directed RNA polymerase subunit alpha (313 aa).

Residues 1 to 226 form an alpha N-terminal domain (alpha-NTD) region; that stretch reads MLEIEKPKIE…EHLQLFVNLN (226 aa). The interval 243 to 313 is alpha C-terminal domain (alpha-CTD); sequence KEKLAEMPIE…MGLSLRKEEE (71 aa).

The protein belongs to the RNA polymerase alpha chain family. In terms of assembly, homodimer. The RNAP catalytic core consists of 2 alpha, 1 beta, 1 beta' and 1 omega subunit. When a sigma factor is associated with the core the holoenzyme is formed, which can initiate transcription.

It carries out the reaction RNA(n) + a ribonucleoside 5'-triphosphate = RNA(n+1) + diphosphate. Functionally, DNA-dependent RNA polymerase catalyzes the transcription of DNA into RNA using the four ribonucleoside triphosphates as substrates. This is DNA-directed RNA polymerase subunit alpha from Carboxydothermus hydrogenoformans (strain ATCC BAA-161 / DSM 6008 / Z-2901).